The primary structure comprises 142 residues: ATP synthase epsilon chain (142 aa).

It belongs to the ATPase epsilon chain family. F-type ATPases have 2 components, CF(1) - the catalytic core - and CF(0) - the membrane proton channel. CF(1) has five subunits: alpha(3), beta(3), gamma(1), delta(1), epsilon(1). CF(0) has three main subunits: a, b and c.

The protein resides in the cell inner membrane. Its function is as follows. Produces ATP from ADP in the presence of a proton gradient across the membrane. This chain is ATP synthase epsilon chain, found in Shewanella denitrificans (strain OS217 / ATCC BAA-1090 / DSM 15013).